The following is a 226-amino-acid chain: Orotate phosphoribosyltransferase (226 aa).

K29 is a binding site for 5-phospho-alpha-D-ribose 1-diphosphate. An orotate-binding site is contributed by 37–38; the sequence is FF. Residues 75–76, R101, K102, K105, H107, and 126–134 contribute to the 5-phospho-alpha-D-ribose 1-diphosphate site; these read YK and DDVISAGTS. S130 and R158 together coordinate orotate.

This sequence belongs to the purine/pyrimidine phosphoribosyltransferase family. PyrE subfamily. As to quaternary structure, homodimer. The cofactor is Mg(2+).

The catalysed reaction is orotidine 5'-phosphate + diphosphate = orotate + 5-phospho-alpha-D-ribose 1-diphosphate. It participates in pyrimidine metabolism; UMP biosynthesis via de novo pathway; UMP from orotate: step 1/2. Its function is as follows. Catalyzes the transfer of a ribosyl phosphate group from 5-phosphoribose 1-diphosphate to orotate, leading to the formation of orotidine monophosphate (OMP). The protein is Orotate phosphoribosyltransferase of Ralstonia nicotianae (strain ATCC BAA-1114 / GMI1000) (Ralstonia solanacearum).